Here is a 212-residue protein sequence, read N- to C-terminus: Peptide methionine sulfoxide reductase MsrA (212 aa).

The span at 1–14 (MSSIDKTQRITQSD) shows a compositional bias: polar residues. Residues 1-21 (MSSIDKTQRITQSDALPGRST) are disordered. Cysteine 52 is a catalytic residue.

The protein belongs to the MsrA Met sulfoxide reductase family.

It carries out the reaction L-methionyl-[protein] + [thioredoxin]-disulfide + H2O = L-methionyl-(S)-S-oxide-[protein] + [thioredoxin]-dithiol. The catalysed reaction is [thioredoxin]-disulfide + L-methionine + H2O = L-methionine (S)-S-oxide + [thioredoxin]-dithiol. In terms of biological role, has an important function as a repair enzyme for proteins that have been inactivated by oxidation. Catalyzes the reversible oxidation-reduction of methionine sulfoxide in proteins to methionine. This chain is Peptide methionine sulfoxide reductase MsrA, found in Pectobacterium carotovorum subsp. carotovorum (strain PC1).